A 238-amino-acid polypeptide reads, in one-letter code: NAD-dependent protein deacylase (238 aa).

The region spanning 1–237 is the Deacetylase sirtuin-type domain; that stretch reads MRGIMKVFVL…PAWVERLLAR (237 aa). 12–31 contacts NAD(+); the sequence is GAGVSAESGLGTFRDKDGVW. The substrate site is built by Y56 and R59. 94–97 contacts NAD(+); that stretch reads QNVD. The Proton acceptor role is filled by H112. Zn(2+)-binding residues include C120, C123, C139, and C142. NAD(+) is bound by residues 179-181, 205-207, and A223; these read GTS and NLE.

This sequence belongs to the sirtuin family. Class III subfamily. Zn(2+) is required as a cofactor.

It is found in the cytoplasm. It carries out the reaction N(6)-acetyl-L-lysyl-[protein] + NAD(+) + H2O = 2''-O-acetyl-ADP-D-ribose + nicotinamide + L-lysyl-[protein]. The catalysed reaction is N(6)-succinyl-L-lysyl-[protein] + NAD(+) + H2O = 2''-O-succinyl-ADP-D-ribose + nicotinamide + L-lysyl-[protein]. NAD-dependent lysine deacetylase and desuccinylase that specifically removes acetyl and succinyl groups on target proteins. Modulates the activities of several proteins which are inactive in their acylated form. The sequence is that of NAD-dependent protein deacylase from Caulobacter vibrioides (strain ATCC 19089 / CIP 103742 / CB 15) (Caulobacter crescentus).